The following is a 415-amino-acid chain: 3-isopropylmalate dehydratase large subunit (415 aa).

Residues Cys295, Cys353, and Cys356 each coordinate [4Fe-4S] cluster.

Belongs to the aconitase/IPM isomerase family. LeuC type 2 subfamily. Heterodimer of LeuC and LeuD. It depends on [4Fe-4S] cluster as a cofactor.

The enzyme catalyses (2R,3S)-3-isopropylmalate = (2S)-2-isopropylmalate. It participates in amino-acid biosynthesis; L-leucine biosynthesis; L-leucine from 3-methyl-2-oxobutanoate: step 2/4. Functionally, catalyzes the isomerization between 2-isopropylmalate and 3-isopropylmalate, via the formation of 2-isopropylmaleate. This chain is 3-isopropylmalate dehydratase large subunit, found in Pyrobaculum neutrophilum (strain DSM 2338 / JCM 9278 / NBRC 100436 / V24Sta) (Thermoproteus neutrophilus).